Reading from the N-terminus, the 336-residue chain is Small ribosomal subunit protein RACK1y (336 aa).

WD repeat units lie at residues 15–55 (GHND…TAVA), 74–113 (GHSHFVQDVVLSSDGQFALSGSWDGELRLWDLATGRTTRR), 116–155 (GHTKDVLSVAFSVDNRQIVSAARDNTIKLWNTLGECKYTI), 164–205 (GHTG…LRTK), 208–247 (GHNGYVNAVAVSPDGSLCASGGKDGTTLLWDLTEGKMLYK), 249–287 (DAGAIIHSLCFSPNRYWLCAATEDSVKIWDLESKLVMQD), and 297–336 (SQMLYCTSLSWSADGSTLFAGYTDGTIRVWKVSGFGGYAI).

It belongs to the WD repeat G protein beta family. Ribosomal protein RACK1 subfamily. In terms of assembly, homodimer and heterodimer with RACK1A.

Its function is as follows. Component of the RACK1 regulatory proteins that play a role in multiple signal transduction pathways. The sequence is that of Small ribosomal subunit protein RACK1y (RACK1B) from Oryza sativa subsp. japonica (Rice).